The following is a 139-amino-acid chain: Translation initiation factor 2 subunit beta (139 aa).

This sequence belongs to the eIF-2-beta/eIF-5 family. As to quaternary structure, heterotrimer composed of an alpha, a beta and a gamma chain.

EIF-2 functions in the early steps of protein synthesis by forming a ternary complex with GTP and initiator tRNA. The sequence is that of Translation initiation factor 2 subunit beta from Saccharolobus islandicus (strain Y.N.15.51 / Yellowstone #2) (Sulfolobus islandicus).